The following is a 461-amino-acid chain: A-type ATP synthase subunit B (461 aa).

Belongs to the ATPase alpha/beta chains family. Has multiple subunits with at least A(3), B(3), C, D, E, F, H, I and proteolipid K(x).

It is found in the cell membrane. Functionally, component of the A-type ATP synthase that produces ATP from ADP in the presence of a proton gradient across the membrane. The B chain is a regulatory subunit. The chain is A-type ATP synthase subunit B from Nitrosopumilus maritimus (strain SCM1).